Here is a 270-residue protein sequence, read N- to C-terminus: 4-hydroxy-tetrahydrodipicolinate reductase (270 aa).

NAD(+) is bound by residues 8–13, aspartate 34, 102–104, and 128–131; these read GALGRM, GTT, and SQNY. The Proton donor/acceptor role is filled by histidine 160. Histidine 161 provides a ligand contact to (S)-2,3,4,5-tetrahydrodipicolinate. Lysine 164 serves as the catalytic Proton donor. 170 to 171 is a (S)-2,3,4,5-tetrahydrodipicolinate binding site; the sequence is GT.

Belongs to the DapB family.

The protein localises to the cytoplasm. The catalysed reaction is (S)-2,3,4,5-tetrahydrodipicolinate + NAD(+) + H2O = (2S,4S)-4-hydroxy-2,3,4,5-tetrahydrodipicolinate + NADH + H(+). The enzyme catalyses (S)-2,3,4,5-tetrahydrodipicolinate + NADP(+) + H2O = (2S,4S)-4-hydroxy-2,3,4,5-tetrahydrodipicolinate + NADPH + H(+). The protein operates within amino-acid biosynthesis; L-lysine biosynthesis via DAP pathway; (S)-tetrahydrodipicolinate from L-aspartate: step 4/4. In terms of biological role, catalyzes the conversion of 4-hydroxy-tetrahydrodipicolinate (HTPA) to tetrahydrodipicolinate. In Methanococcus maripaludis (strain DSM 14266 / JCM 13030 / NBRC 101832 / S2 / LL), this protein is 4-hydroxy-tetrahydrodipicolinate reductase.